Consider the following 488-residue polypeptide: Probable G-protein coupled receptor Mth-like 12 (488 aa).

Positions 1–17 (MFLWLKCFCTLIIVTIA) are cleaved as a signal peptide. The Extracellular portion of the chain corresponds to 18–215 (KNSSAKIPHC…NRRCYRNVMP (198 aa)). N-linked (GlcNAc...) asparagine glycosylation is found at N19, N34, and N55. 5 cysteine pairs are disulfide-bonded: C27-C81, C83-C88, C92-C189, C93-C104, and C155-C209. Residue N141 is glycosylated (N-linked (GlcNAc...) asparagine). Residues 216–236 (GIAQLSVISVVGFILTLAVYL) form a helical membrane-spanning segment. Over 237–247 (SVEKLRNLLGK) the chain is Cytoplasmic. Residues 248–268 (CLICSLFSMFMEYFIWTMDYF) form a helical membrane-spanning segment. Residues 269-283 (RLLQSICSAAGYMKY) lie on the Extracellular side of the membrane. Residues 284–304 (FFSMSSYLWFSVVSFHLWELF) traverse the membrane as a helical segment. Residues 305–315 (TSLNRHEPQYR) lie on the Cytoplasmic side of the membrane. Residues 316–336 (FLIYNTFVWCTAAIPTVVIFS) form a helical membrane-spanning segment. Topologically, residues 337–373 (MNQMWENDPGKSEWLPLVGYFGCSVKDWNSSSWFYSH) are extracellular. A glycan (N-linked (GlcNAc...) asparagine) is linked at N365. A helical transmembrane segment spans residues 374 to 394 (IPIVILNSFNVIMFVLTAIYI). The Cytoplasmic portion of the chain corresponds to 395 to 416 (WKVKKGVKSFAQHDERNTTCLE). Residues 417 to 437 (FNVQTYIQFVRLFLIMGASWL) form a helical membrane-spanning segment. Residues 438–454 (LDQLTRLAEDSHLLLDT) are Extracellular-facing. The chain crosses the membrane as a helical span at residues 455 to 475 (IVLNLTVYLNAAFGILIFVLL). Residues 476-488 (ILKGSTFKMIMER) lie on the Cytoplasmic side of the membrane.

This sequence belongs to the G-protein coupled receptor 2 family. Mth subfamily.

It is found in the cell membrane. This Drosophila melanogaster (Fruit fly) protein is Probable G-protein coupled receptor Mth-like 12 (mthl12).